The sequence spans 492 residues: MPSTNPFLTLPYEPAFASLGSEFSDPVEAATFPAHQLRFRNDRLLPILGLDPATVADEHFIEAFGRFQGRSPLLAMRYHGYQFGIYSPDLGDGRGFLYGQVRGRNGWLYDFGTKGSGRTPYSRGGDGKPTLKGGVREVLASEFLQRLGVRTGRCLSLIETGEELWRGDEPSPTRSSVMVRFNRTHIRFGTFERLHYFKRADLVRQLLDHVIATYYSHLLGDPEADAKFYAELTERTADLAAQWMAAGFCHAVLNTDNLSIVGESFDYGPWAFLDRFDPKFTAAYFDHSGRYRYENQPGICQLNLELLQVPLGMVMSAADLEAGIAGFGDRYQATYSRLMLRRLGFEADQLHSAIADDLIITTLQLLLRAPIGYNEFFARLRAQFQPSWRSDLSAILPDWITTDLEALPEAQWQGWRDRYHQLLTHLPESQLPLIQQQLAQANPEISPIRPVVESVWDPIAIDDNWEPLEALLNRWRHDGDGAADGAVVPNAN.

ATP is bound by residues Gly91, Gly93, Arg94, Lys114, Asp126, Gly127, Arg180, and Arg187. Asp256 (proton acceptor) is an active-site residue. Positions 257 and 266 each coordinate Mg(2+). Asp266 serves as a coordination point for ATP.

Belongs to the SELO family. Requires Mg(2+) as cofactor. Mn(2+) is required as a cofactor.

It catalyses the reaction L-seryl-[protein] + ATP = 3-O-(5'-adenylyl)-L-seryl-[protein] + diphosphate. The catalysed reaction is L-threonyl-[protein] + ATP = 3-O-(5'-adenylyl)-L-threonyl-[protein] + diphosphate. The enzyme catalyses L-tyrosyl-[protein] + ATP = O-(5'-adenylyl)-L-tyrosyl-[protein] + diphosphate. It carries out the reaction L-histidyl-[protein] + UTP = N(tele)-(5'-uridylyl)-L-histidyl-[protein] + diphosphate. It catalyses the reaction L-seryl-[protein] + UTP = O-(5'-uridylyl)-L-seryl-[protein] + diphosphate. The catalysed reaction is L-tyrosyl-[protein] + UTP = O-(5'-uridylyl)-L-tyrosyl-[protein] + diphosphate. Nucleotidyltransferase involved in the post-translational modification of proteins. It can catalyze the addition of adenosine monophosphate (AMP) or uridine monophosphate (UMP) to a protein, resulting in modifications known as AMPylation and UMPylation. This Synechococcus sp. (strain ATCC 27144 / PCC 6301 / SAUG 1402/1) (Anacystis nidulans) protein is Protein nucleotidyltransferase YdiU.